Reading from the N-terminus, the 391-residue chain is Casein kinase II subunit alpha (391 aa).

Residues 36–41 (QDDYQL) form an interaction with beta subunit region. Residues 39–324 (YQLVRKLGRG…AREAMEHPYF (286 aa)) form the Protein kinase domain. Residues 45-53 (LGRGKYSEV) and Lys-68 contribute to the ATP site. Catalysis depends on Asp-156, which acts as the Proton acceptor. Phosphothreonine; by CDK1 occurs at positions 344 and 360. Phosphoserine; by CDK1 is present on residues Ser-362 and Ser-370.

The protein belongs to the protein kinase superfamily. Ser/Thr protein kinase family. CK2 subfamily. In terms of assembly, heterotetramer composed of two catalytic subunits (alpha chain and/or alpha' chain) and two regulatory subunits (beta chains). The tetramer can exist as a combination of 2 alpha/2 beta, 2 alpha'/2 beta or 1 alpha/1 alpha'/2 beta subunits. Also part of a CK2-SPT16-SSRP1 complex composed of SSRP1, SUPT16H, CSNK2A1, CSNK2A2 and CSNK2B, which forms following UV irradiation. Interacts with RNPS1. Interacts with SNAI1. Interacts with PML. Interacts with CCAR2. Interacts with HIRIP3. Post-translationally, phosphorylated at Thr-344, Thr-360, Ser-362 and Ser-370 by CDK1 in prophase and metaphase and dephosphorylated during anaphase. Phosphorylation does not directly affect casein kinase 2 activity, but may contribute to its regulation by forming binding sites for interacting proteins and/or targeting it to different compartments.

It localises to the nucleus. The catalysed reaction is L-seryl-[protein] + ATP = O-phospho-L-seryl-[protein] + ADP + H(+). It catalyses the reaction L-threonyl-[protein] + ATP = O-phospho-L-threonyl-[protein] + ADP + H(+). Constitutively active protein kinase whose activity is not directly affected by phosphorylation. Seems to be regulated by level of expression and localization. In terms of biological role, catalytic subunit of a constitutively active serine/threonine-protein kinase complex that phosphorylates a large number of substrates containing acidic residues C-terminal to the phosphorylated serine or threonine. Regulates numerous cellular processes, such as cell cycle progression, apoptosis and transcription, as well as viral infection. May act as a regulatory node which integrates and coordinates numerous signals leading to an appropriate cellular response. During mitosis, functions as a component of the p53/TP53-dependent spindle assembly checkpoint (SAC) that maintains cyclin-B-CDK1 activity and G2 arrest in response to spindle damage. Also required for p53/TP53-mediated apoptosis, phosphorylating 'Ser-392' of p53/TP53 following UV irradiation. Phosphorylates a number of DNA repair proteins in response to DNA damage, such as MDC1, MRE11, RAD9A, RAD51 and HTATSF1, promoting their recruitment to DNA damage sites. Can also negatively regulate apoptosis. Phosphorylates the caspases CASP9 and CASP2 and the apoptotic regulator NOL3. Phosphorylation protects CASP9 from cleavage and activation by CASP8, and inhibits the dimerization of CASP2 and activation of CASP8. Phosphorylates YY1, protecting YY1 from cleavage by CASP7 during apoptosis. Regulates transcription by direct phosphorylation of RNA polymerases I, II, III and IV. Also phosphorylates and regulates numerous transcription factors including NF-kappa-B, STAT1, CREB1, IRF1, IRF2, ATF1, ATF4, SRF, MAX, JUN, FOS, MYC and MYB. Phosphorylates Hsp90 and its co-chaperones FKBP4 and CDC37, which is essential for chaperone function. Mediates sequential phosphorylation of FNIP1, promoting its gradual interaction with Hsp90, leading to activate both kinase and non-kinase client proteins of Hsp90. Regulates Wnt signaling by phosphorylating CTNNB1 and the transcription factor LEF1. Acts as an ectokinase that phosphorylates several extracellular proteins. Phosphorylates PML at 'Ser-565' and primes it for ubiquitin-mediated degradation. Plays an important role in the circadian clock function by phosphorylating BMAL1 at 'Ser-90' which is pivotal for its interaction with CLOCK and which controls CLOCK nuclear entry. Phosphorylates FMR1, promoting FMR1-dependent formation of a membraneless compartment. May phosphorylate histone H2A on 'Ser-1'. The polypeptide is Casein kinase II subunit alpha (Csnk2a1) (Rattus norvegicus (Rat)).